A 337-amino-acid polypeptide reads, in one-letter code: Holliday junction branch migration complex subunit RuvB (337 aa).

The interval 1–180 (MTRLISADKS…FGVISRLEFY (180 aa)) is large ATPase domain (RuvB-L). Residues L19, R20, G61, K64, T65, T66, 127-129 (EDF), R170, Y180, and R217 each bind ATP. Position 65 (T65) interacts with Mg(2+). Positions 181–251 (THEELAFIIT…VADQALALLE (71 aa)) are small ATPAse domain (RuvB-S). Positions 254 to 337 (DMGFDMMDRA…APEPPQGKLF (84 aa)) are head domain (RuvB-H). Residues R309 and R314 each contribute to the DNA site.

It belongs to the RuvB family. As to quaternary structure, homohexamer. Forms an RuvA(8)-RuvB(12)-Holliday junction (HJ) complex. HJ DNA is sandwiched between 2 RuvA tetramers; dsDNA enters through RuvA and exits via RuvB. An RuvB hexamer assembles on each DNA strand where it exits the tetramer. Each RuvB hexamer is contacted by two RuvA subunits (via domain III) on 2 adjacent RuvB subunits; this complex drives branch migration. In the full resolvosome a probable DNA-RuvA(4)-RuvB(12)-RuvC(2) complex forms which resolves the HJ.

It is found in the cytoplasm. It catalyses the reaction ATP + H2O = ADP + phosphate + H(+). In terms of biological role, the RuvA-RuvB-RuvC complex processes Holliday junction (HJ) DNA during genetic recombination and DNA repair, while the RuvA-RuvB complex plays an important role in the rescue of blocked DNA replication forks via replication fork reversal (RFR). RuvA specifically binds to HJ cruciform DNA, conferring on it an open structure. The RuvB hexamer acts as an ATP-dependent pump, pulling dsDNA into and through the RuvAB complex. RuvB forms 2 homohexamers on either side of HJ DNA bound by 1 or 2 RuvA tetramers; 4 subunits per hexamer contact DNA at a time. Coordinated motions by a converter formed by DNA-disengaged RuvB subunits stimulates ATP hydrolysis and nucleotide exchange. Immobilization of the converter enables RuvB to convert the ATP-contained energy into a lever motion, pulling 2 nucleotides of DNA out of the RuvA tetramer per ATP hydrolyzed, thus driving DNA branch migration. The RuvB motors rotate together with the DNA substrate, which together with the progressing nucleotide cycle form the mechanistic basis for DNA recombination by continuous HJ branch migration. Branch migration allows RuvC to scan DNA until it finds its consensus sequence, where it cleaves and resolves cruciform DNA. This is Holliday junction branch migration complex subunit RuvB from Citrifermentans bemidjiense (strain ATCC BAA-1014 / DSM 16622 / JCM 12645 / Bem) (Geobacter bemidjiensis).